We begin with the raw amino-acid sequence, 639 residues long: Tetracycline resistance protein TetW (639 aa).

Residues 1 to 243 enclose the tr-type G domain; the sequence is MKIINIGILA…VTGLFQPIGE (243 aa). GTP contacts are provided by residues 10-17, 74-78, and 128-131; these read AHVDAGKT, DTPGH, and NKID.

It belongs to the TRAFAC class translation factor GTPase superfamily. Classic translation factor GTPase family. TetM/TetO subfamily.

Functionally, abolishes the inhibitory effect of tetracyclin on protein synthesis by a non-covalent modification of the ribosomes. The chain is Tetracycline resistance protein TetW (tetW) from Butyrivibrio fibrisolvens.